A 162-amino-acid polypeptide reads, in one-letter code: Phosphopantetheine adenylyltransferase (162 aa).

Residue S11 coordinates substrate. Residues 11–12 and H19 contribute to the ATP site; that span reads SF. 3 residues coordinate substrate: K43, V76, and R90. ATP contacts are provided by residues 91-93, E101, and 126-132; these read GLR and HLYISSS.

It belongs to the bacterial CoaD family. In terms of assembly, homohexamer. Mg(2+) serves as cofactor.

The protein resides in the cytoplasm. It catalyses the reaction (R)-4'-phosphopantetheine + ATP + H(+) = 3'-dephospho-CoA + diphosphate. The protein operates within cofactor biosynthesis; coenzyme A biosynthesis; CoA from (R)-pantothenate: step 4/5. Its activity is regulated as follows. Is inhibited by a series of cycloalkyl pyrimidines, which also show suppression of bacterial growth. Functionally, reversibly transfers an adenylyl group from ATP to 4'-phosphopantetheine, yielding dephospho-CoA (dPCoA) and pyrophosphate. The sequence is that of Phosphopantetheine adenylyltransferase from Streptococcus pneumoniae (strain ATCC BAA-255 / R6).